The chain runs to 470 residues: Ribulose bisphosphate carboxylase large chain (470 aa).

Substrate is bound by residues asparagine 118 and threonine 168. The Proton acceptor role is filled by lysine 170. Position 172 (lysine 172) interacts with substrate. 3 residues coordinate Mg(2+): lysine 196, aspartate 198, and glutamate 199. Lysine 196 carries the N6-carboxylysine modification. Histidine 289 (proton acceptor) is an active-site residue. Residues arginine 290, histidine 322, and serine 374 each coordinate substrate.

It belongs to the RuBisCO large chain family. Type I subfamily. As to quaternary structure, heterohexadecamer of 8 large chains and 8 small chains; disulfide-linked. The disulfide link is formed within the large subunit homodimers. RuBisCO interacts with the C-terminus of CcmM, and can be found in complexes that also include carbonic anhydrase (ccaA). RuBisCO associates with both the internal and shell portion of carboxysomes. It depends on Mg(2+) as a cofactor. The disulfide bond which can form in the large chain dimeric partners within the hexadecamer appears to be associated with oxidative stress and protein turnover.

The protein localises to the carboxysome. The enzyme catalyses 2 (2R)-3-phosphoglycerate + 2 H(+) = D-ribulose 1,5-bisphosphate + CO2 + H2O. It catalyses the reaction D-ribulose 1,5-bisphosphate + O2 = 2-phosphoglycolate + (2R)-3-phosphoglycerate + 2 H(+). Its function is as follows. RuBisCO catalyzes two reactions: the carboxylation of D-ribulose 1,5-bisphosphate, the primary event in carbon dioxide fixation, as well as the oxidative fragmentation of the pentose substrate in the photorespiration process. Both reactions occur simultaneously and in competition at the same active site. The protein is Ribulose bisphosphate carboxylase large chain of Synechocystis sp. (strain ATCC 27184 / PCC 6803 / Kazusa).